The following is a 218-amino-acid chain: Major NAD(P)H-flavin oxidoreductase (218 aa).

FMN-binding positions include 12-16 (RYTSK) and Asn-73. 154-159 (LARLNI) is a binding site for NAD(+). FMN is bound by residues 165–166 (EG) and 206–208 (KSR).

Belongs to the nitroreductase family. In terms of assembly, homodimer. It depends on FMN as a cofactor.

In terms of biological role, involved in bioluminescence. It is a good supplier of reduced flavin mononucleotide (FMNH2) to the bioluminescence reaction. Major FMN reductase. It is capable of using both NADH and NADPH as electron donors. As electron acceptor, FMN is the most effective, FAD is considerably effective, and riboflavin is the least effective. The polypeptide is Major NAD(P)H-flavin oxidoreductase (Aliivibrio fischeri (Vibrio fischeri)).